A 175-amino-acid chain; its full sequence is CDP-archaeol synthase (175 aa).

The next 4 helical transmembrane spans lie at 41–61, 82–102, 122–142, and 150–170; these read GLFSGIFCGFIAGCIEIWLSS, LIVVLALASGALFGDMFKSFF, FVVGAWVFTYLVAPEWFVSNF, and VIIITPLLHLTTNIIGYLIGV.

It belongs to the CDP-archaeol synthase family. Requires Mg(2+) as cofactor.

Its subcellular location is the cell membrane. The enzyme catalyses 2,3-bis-O-(geranylgeranyl)-sn-glycerol 1-phosphate + CTP + H(+) = CDP-2,3-bis-O-(geranylgeranyl)-sn-glycerol + diphosphate. Its pathway is membrane lipid metabolism; glycerophospholipid metabolism. Functionally, catalyzes the formation of CDP-2,3-bis-(O-geranylgeranyl)-sn-glycerol (CDP-archaeol) from 2,3-bis-(O-geranylgeranyl)-sn-glycerol 1-phosphate (DGGGP) and CTP. This reaction is the third ether-bond-formation step in the biosynthesis of archaeal membrane lipids. The protein is CDP-archaeol synthase of Methanosarcina barkeri (strain Fusaro / DSM 804).